Consider the following 422-residue polypeptide: Tyrosine--tRNA ligase (422 aa).

Tyr36 lines the L-tyrosine pocket. The short motif at 41–50 (PTAGSLHIGH) is the 'HIGH' region element. 2 residues coordinate L-tyrosine: Tyr174 and Gln178. Residues 234-238 (KFGKT) carry the 'KMSKS' region motif. Lys237 contributes to the ATP binding site. The region spanning 356-420 (TDLVTLLVES…GKKQYRLVTW (65 aa)) is the S4 RNA-binding domain.

Belongs to the class-I aminoacyl-tRNA synthetase family. TyrS type 1 subfamily. Homodimer.

The protein resides in the cytoplasm. The enzyme catalyses tRNA(Tyr) + L-tyrosine + ATP = L-tyrosyl-tRNA(Tyr) + AMP + diphosphate + H(+). Functionally, catalyzes the attachment of tyrosine to tRNA(Tyr) in a two-step reaction: tyrosine is first activated by ATP to form Tyr-AMP and then transferred to the acceptor end of tRNA(Tyr). This chain is Tyrosine--tRNA ligase, found in Aeromonas hydrophila subsp. hydrophila (strain ATCC 7966 / DSM 30187 / BCRC 13018 / CCUG 14551 / JCM 1027 / KCTC 2358 / NCIMB 9240 / NCTC 8049).